Reading from the N-terminus, the 217-residue chain is Ufm1-specific protease 1 (217 aa).

Active-site residues include Cys-53, Asp-175, and His-177.

This sequence belongs to the peptidase C78 family. As to expression, widely expressed. Expressed at higher level in brain, heart, kidney and skeletal muscle.

It localises to the cytoplasm. Its subcellular location is the cytosol. Functionally, thiol-dependent isopeptidase that specifically mediate the processing of UFM1 precursors as well as the deconjugation of UFM1 from target proteins. Mainly responsible for the maturation of the UFM1 precursor, a prerequisite for conjugation reactions. The sequence is that of Ufm1-specific protease 1 from Mus musculus (Mouse).